The following is a 339-amino-acid chain: Anthranilate phosphoribosyltransferase (339 aa).

Residues Gly-79, 82 to 83, Thr-87, 89 to 92, 107 to 115, and Ser-119 contribute to the 5-phospho-alpha-D-ribose 1-diphosphate site; these read GD, NIST, and KHGNRAVSS. Gly-79 contributes to the anthranilate binding site. Ser-91 contributes to the Mg(2+) binding site. Asn-110 contributes to the anthranilate binding site. Position 165 (Arg-165) interacts with anthranilate. Mg(2+) contacts are provided by Asp-224 and Glu-225.

This sequence belongs to the anthranilate phosphoribosyltransferase family. In terms of assembly, homodimer. The cofactor is Mg(2+).

It catalyses the reaction N-(5-phospho-beta-D-ribosyl)anthranilate + diphosphate = 5-phospho-alpha-D-ribose 1-diphosphate + anthranilate. Its pathway is amino-acid biosynthesis; L-tryptophan biosynthesis; L-tryptophan from chorismate: step 2/5. Its function is as follows. Catalyzes the transfer of the phosphoribosyl group of 5-phosphorylribose-1-pyrophosphate (PRPP) to anthranilate to yield N-(5'-phosphoribosyl)-anthranilate (PRA). This is Anthranilate phosphoribosyltransferase from Geobacillus thermodenitrificans (strain NG80-2).